The chain runs to 875 residues: MASLDLPYRCPRCGEHKRFRSLSSLRAHLEYSHTYETLYILSKTNSICDGAAAAAAAAAAASGFPLAPEPAALLAVPGARREVFESTSFQGKEQAAGPSPAAPHLLHHHHHHAPLAHFPGDLVPASLPCEELAEPGLVPAAAARYALREIEIPLGELFARKSVASSACSTPPPGPGPGPCPGPASASPASPSPADVAYEEGLARLKIRALEKLEVDRRLERLSEEVEQKIAGQVGRLQAELERKAAELETARQESARLGREKEELEERASELSRQVDVSVELLASLKQDLVHKEQELSRKQQEVVQIDQFLKETAAREASAKLRLQQFIEELLERADRAERQLQVISSSCGSTPSASLGRGGGGGGAGPNARGPGRMREHHVGPAVPNTYAVSRHGSSPSTGASSRVPAASQSSGCYDSDSLELPRPEEGAPEDSGPGGLGTRAQAANGGSERSQPPRSSGLRRQAIQNWQRRPRRHSTEGEEGDVSDVGSRTTESEAEGPLDAPRPGPAMAGPLSSCRLSARPEGGSGRGRRAERVSPSRSNEVISPEILKMRAALFCIFTYLDTRTLLHAAEVCRDWRFVARHPAVWTRVLLENARVCSKFLAMLAQWCTQAHSLTLQNLKPRQRGKKESKEEYARSTRGCLEAGLESLLKAAGGNLLILRISHCPNILTDRSLWLASCYCRALQAVTYRSATDPVGHEVIWALGAGCREIVSLQVAPLHPCQQPTRFSNRCLQMIGRCWPHLRALGVGGAGCGVQGLASLARNCMRLQVLELDHVSEITQEVAAEVCREGLKGLEMLVLTATPVTPKALLHFNSICRNLKSIVVQIGIADYFKEPSSPEAQKLFEDMVTKLQALRRRPGFSKILHIKVEGGC.

3 disordered regions span residues 85 to 110 (ESTS…HHHH), 165 to 194 (SSAC…PSPA), and 347 to 542 (SSSC…PSRS). Residues 170 to 182 (TPPPGPGPGPCPG) show a composition bias toward pro residues. Residues 183–194 (PASASPASPSPA) are compositionally biased toward low complexity. Positions 209–351 (ALEKLEVDRR…QLQVISSSCG (143 aa)) form a coiled coil. Positions 347–356 (SSSCGSTPSA) are enriched in polar residues. Over residues 359–368 (GRGGGGGGAG) the composition is skewed to gly residues. An Omega-N-methylarginine modification is found at Arg360. Residues 395 to 416 (HGSSPSTGASSRVPAASQSSGC) show a composition bias toward polar residues. The residue at position 478 (Ser478) is a Phosphoserine. Thr479 is subject to Phosphothreonine. Residues 496–540 (SEAEGPLDAPRPGPAMAGPLSSCRLSARPEGGSGRGRRAERVSPS) enclose the F-box domain. A Phosphoserine modification is found at Ser762.

In terms of assembly, directly interacts with SKP1 and CUL1.

Its function is as follows. Substrate-recognition component of the SCF (SKP1-CUL1-F-box protein)-type E3 ubiquitin ligase complex. The polypeptide is F-box only protein 41 (FBXO41) (Homo sapiens (Human)).